The primary structure comprises 556 residues: Testis-specific protein 10-interacting protein (556 aa).

The segment covering methionine 1–glycine 20 has biased composition (polar residues). Disordered stretches follow at residues methionine 1 to lysine 102 and cysteine 180 to aspartate 320. Residues lysine 75–lysine 85 are compositionally biased toward basic residues. Acidic residues-rich tracts occupy residues glutamate 213–glutamate 225 and leucine 246–aspartate 260. Basic residues predominate over residues proline 266–arginine 278. Residues glutamate 304 to aspartate 320 are compositionally biased toward basic and acidic residues. Residues leucine 387–glutamine 463 adopt a coiled-coil conformation. The interval alanine 503–proline 556 is disordered. A compositionally biased stretch (polar residues) spans proline 527 to aspartate 543.

The polypeptide is Testis-specific protein 10-interacting protein (TSGA10IP) (Bos taurus (Bovine)).